The chain runs to 236 residues: ATP-dependent dethiobiotin synthetase BioD (236 aa).

A Mg(2+)-binding site is contributed by threonine 19. Lysine 40 is an active-site residue. The Mg(2+) site is built by aspartate 61 and glutamate 122. ATP is bound by residues aspartate 61, 122–125 (EGVG), 182–183 (NT), and 211–213 (PRL).

The protein belongs to the dethiobiotin synthetase family. As to quaternary structure, homodimer. Mg(2+) is required as a cofactor.

It is found in the cytoplasm. The catalysed reaction is (7R,8S)-7,8-diammoniononanoate + CO2 + ATP = (4R,5S)-dethiobiotin + ADP + phosphate + 3 H(+). Its pathway is cofactor biosynthesis; biotin biosynthesis; biotin from 7,8-diaminononanoate: step 1/2. Functionally, catalyzes a mechanistically unusual reaction, the ATP-dependent insertion of CO2 between the N7 and N8 nitrogen atoms of 7,8-diaminopelargonic acid (DAPA, also called 7,8-diammoniononanoate) to form a ureido ring. The chain is ATP-dependent dethiobiotin synthetase BioD from Janthinobacterium sp. (strain Marseille) (Minibacterium massiliensis).